Here is a 238-residue protein sequence, read N- to C-terminus: Proteasome subunit beta type-6 (238 aa).

An N-acetylalanine modification is found at Ala-2. A propeptide spans 2–33 (AAALAVRRAGSAPAFGPEALTPDWENREVSTG) (removed in mature form). The active-site Nucleophile is the Thr-34. Phosphothreonine is present on Thr-68.

The protein belongs to the peptidase T1B family. As to quaternary structure, the 26S proteasome consists of a 20S proteasome core and two 19S regulatory subunits. The 20S proteasome core is a barrel-shaped complex made of 28 subunits that are arranged in four stacked rings. The two outer rings are each formed by seven alpha subunits, and the two inner rings are formed by seven beta subunits. The proteolytic activity is exerted by three beta-subunits PSMB5, PSMB6 and PSMB7.

It is found in the cytoplasm. Its subcellular location is the nucleus. It catalyses the reaction Cleavage of peptide bonds with very broad specificity.. Its function is as follows. Component of the 20S core proteasome complex involved in the proteolytic degradation of most intracellular proteins. This complex plays numerous essential roles within the cell by associating with different regulatory particles. Associated with two 19S regulatory particles, forms the 26S proteasome and thus participates in the ATP-dependent degradation of ubiquitinated proteins. The 26S proteasome plays a key role in the maintenance of protein homeostasis by removing misfolded or damaged proteins that could impair cellular functions, and by removing proteins whose functions are no longer required. Associated with the PA200 or PA28, the 20S proteasome mediates ubiquitin-independent protein degradation. This type of proteolysis is required in several pathways including spermatogenesis (20S-PA200 complex) or generation of a subset of MHC class I-presented antigenic peptides (20S-PA28 complex). Within the 20S core complex, PSMB6 displays a peptidylglutamyl-hydrolyzing activity also termed postacidic or caspase-like activity, meaning that the peptides bond hydrolysis occurs directly after acidic residues. In Mus musculus (Mouse), this protein is Proteasome subunit beta type-6 (Psmb6).